The chain runs to 437 residues: Enolase (437 aa).

A (2R)-2-phosphoglycerate-binding site is contributed by Gln-162. The active-site Proton donor is the Glu-204. Mg(2+)-binding residues include Asp-251, Glu-297, and Asp-324. (2R)-2-phosphoglycerate is bound by residues Lys-349, Arg-378, Ser-379, and Lys-400. Lys-349 (proton acceptor) is an active-site residue.

It belongs to the enolase family. Requires Mg(2+) as cofactor.

Its subcellular location is the cytoplasm. The protein localises to the secreted. It is found in the cell surface. It carries out the reaction (2R)-2-phosphoglycerate = phosphoenolpyruvate + H2O. The protein operates within carbohydrate degradation; glycolysis; pyruvate from D-glyceraldehyde 3-phosphate: step 4/5. Functionally, catalyzes the reversible conversion of 2-phosphoglycerate (2-PG) into phosphoenolpyruvate (PEP). It is essential for the degradation of carbohydrates via glycolysis. In Prosthecochloris aestuarii (strain DSM 271 / SK 413), this protein is Enolase.